Reading from the N-terminus, the 231-residue chain is Aspartate/glutamate leucyltransferase (231 aa).

It belongs to the R-transferase family. Bpt subfamily.

Its subcellular location is the cytoplasm. It catalyses the reaction N-terminal L-glutamyl-[protein] + L-leucyl-tRNA(Leu) = N-terminal L-leucyl-L-glutamyl-[protein] + tRNA(Leu) + H(+). The enzyme catalyses N-terminal L-aspartyl-[protein] + L-leucyl-tRNA(Leu) = N-terminal L-leucyl-L-aspartyl-[protein] + tRNA(Leu) + H(+). Its function is as follows. Functions in the N-end rule pathway of protein degradation where it conjugates Leu from its aminoacyl-tRNA to the N-termini of proteins containing an N-terminal aspartate or glutamate. The polypeptide is Aspartate/glutamate leucyltransferase (Pseudoalteromonas atlantica (strain T6c / ATCC BAA-1087)).